Reading from the N-terminus, the 73-residue chain is Large ribosomal subunit protein bL31 (73 aa).

This sequence belongs to the bacterial ribosomal protein bL31 family. Type A subfamily. Part of the 50S ribosomal subunit.

In terms of biological role, binds the 23S rRNA. This Cereibacter sphaeroides (strain ATCC 17029 / ATH 2.4.9) (Rhodobacter sphaeroides) protein is Large ribosomal subunit protein bL31.